A 426-amino-acid chain; its full sequence is Anhydromevalonate phosphate decarboxylase (426 aa).

Residues Asn-148 and Glu-211 each contribute to the Mn(2+) site. The active-site Proton acceptor is Asp-255.

This sequence belongs to the UbiD family. Prenylated FMN serves as cofactor. It depends on Mn(2+) as a cofactor.

It catalyses the reaction (2E)-3-methyl-5-phosphooxypent-2-enoate + H(+) = isopentenyl phosphate + CO2. The protein operates within isoprenoid biosynthesis; isopentenyl diphosphate biosynthesis via mevalonate pathway. In terms of biological role, catalyzes the conversion of trans-anhydromevalonate 5-phosphate (tAHMP) into isopentenyl phosphate. Involved in the archaeal mevalonate (MVA) pathway, which provides fundamental precursors for isoprenoid biosynthesis, such as isopentenyl diphosphate (IPP) and dimethylallyl diphosphate (DMAPP). The protein is Anhydromevalonate phosphate decarboxylase of Archaeoglobus fulgidus (strain ATCC 49558 / DSM 4304 / JCM 9628 / NBRC 100126 / VC-16).